Consider the following 257-residue polypeptide: UPF0246 protein VCM66_2278 (257 aa).

This sequence belongs to the UPF0246 family.

The protein is UPF0246 protein VCM66_2278 of Vibrio cholerae serotype O1 (strain M66-2).